Consider the following 4870-residue polypeptide: Malformin synthetase mlfA (4870 aa).

The adenylation 1 stretch occupies residues 106–497 (ERRAANRPHS…CGRADTQVKL (392 aa)). In terms of domain architecture, Carrier 1 spans 635–711 (LGLSQLEQEI…EASSLAEVQE (77 aa)). Serine 672 is modified (O-(pantetheine 4'-phosphoryl)serine). Positions 749-1133 (EDVFPCTTMQ…ALNTLTLLQA (385 aa)) are condensation 1. The segment at 1161 to 1550 (DRWVTRQPES…GRKDTQVKLR (390 aa)) is adenylation 2. Residues 1688–1765 (TASSKLELTL…QLAAILGEAT (78 aa)) enclose the Carrier 2 domain. The residue at position 1725 (serine 1725) is an O-(pantetheine 4'-phosphoryl)serine. Disordered stretches follow at residues 1764 to 1794 (ATGQPESSASSTTEEGFTFSTPDDSSTNDGV) and 1829 to 1859 (GSSSCKTPSVSSSSSSSSSRKKKSAKVVSPV). Low complexity-rich tracts occupy residues 1769–1792 (ESSASSTTEEGFTFSTPDDSSTND) and 1830–1846 (SSSCKTPSVSSSSSSSS). Residues 1898 to 2313 (EDIYPATALQ…GVSYRDKQTL (416 aa)) form a condensation 2 region. The tract at residues 2336–2728 (VRTPHAPAVF…IGRRDGQLKL (393 aa)) is adenylation 3. Residues 2864–2940 (RPATAQEREM…QLMRHLSANG (77 aa)) form the Carrier 3 domain. Serine 2901 carries the O-(pantetheine 4'-phosphoryl)serine modification. Condensation regions lie at residues 2957 to 3422 (WVPL…TYDQ) and 3443 to 3862 (DIYP…EQLV). Positions 3887–4277 (HSSREAACAW…VGRKDNQIKF (391 aa)) are adenylation 4. A Carrier 4 domain is found at 4411 to 4487 (MPFTAAECKM…DLAYRTANLV (77 aa)). Position 4448 is an O-(pantetheine 4'-phosphoryl)serine (serine 4448). The interval 4524-4837 (EVLPTTSFQR…LQTIVQHQNN (314 aa)) is condensation 5.

This sequence belongs to the NRP synthetase family.

The protein operates within secondary metabolite biosynthesis. In terms of biological role, nonribosomal peptide synthetase; part of the gene cluster that mediates the biosynthesis of malformins, cyclic pentapeptides with a disulfide bond between 2 consecutive cysteins, that show potential anti-tumor as well as antimalarial and antitrypanosomal properties. The nonribosomal peptide synthetase mlfA is responsible of the formation of the cyclic pentapeptide. The malformin biosynthesis clusters in malformin-producing fungi also contain enzymes involved in the formation of the disulfide bond between the two consecutive cysteins within malformins, in addition to additional tailoring enzymes such as methyltransferases or oxidoreductases. They are also composed of up to 4 major facilitator superfamily transporters, and transcription factors probably involved in the regulation of the expression of those clusters. The chain is Malformin synthetase mlfA from Aspergillus niger (strain ATCC 1015 / CBS 113.46 / FGSC A1144 / LSHB Ac4 / NCTC 3858a / NRRL 328 / USDA 3528.7).